Reading from the N-terminus, the 299-residue chain is GTPase Era (299 aa).

The region spanning Lys5–Glu172 is the Era-type G domain. Residues Gly13–Ser20 are G1. Gly13–Ser20 lines the GTP pocket. Residues Gln39–Asn43 are G2. The tract at residues Asp60 to Gly63 is G3. GTP contacts are provided by residues Asp60–Ile64 and Asn122–Asp125. The interval Asn122–Asp125 is G4. The G5 stretch occupies residues Ile151 to Ala153. One can recognise a KH type-2 domain in the interval Thr203 to Arg280.

It belongs to the TRAFAC class TrmE-Era-EngA-EngB-Septin-like GTPase superfamily. Era GTPase family. In terms of assembly, monomer.

Its subcellular location is the cytoplasm. The protein localises to the cell membrane. Its function is as follows. An essential GTPase that binds both GDP and GTP, with rapid nucleotide exchange. Plays a role in 16S rRNA processing and 30S ribosomal subunit biogenesis and possibly also in cell cycle regulation and energy metabolism. This chain is GTPase Era, found in Staphylococcus aureus (strain Mu3 / ATCC 700698).